The chain runs to 277 residues: Probable cytochrome c oxidase subunit 3 (277 aa).

Helical transmembrane passes span 20–40 (PWPI…VSFM), 45–65 (FNHY…YSWW), 88–108 (IGMA…FASF), 173–193 (CVTA…MQAY), 211–231 (FYLA…FLIV), and 255–275 (AWYW…VYIF).

It belongs to the cytochrome c oxidase subunit 3 family.

The protein localises to the cell membrane. The catalysed reaction is 4 Fe(II)-[cytochrome c] + O2 + 8 H(+)(in) = 4 Fe(III)-[cytochrome c] + 2 H2O + 4 H(+)(out). The chain is Probable cytochrome c oxidase subunit 3 (ctaE) from Rickettsia bellii (strain RML369-C).